A 459-amino-acid polypeptide reads, in one-letter code: C-type lectin domain family 14 member A (459 aa).

Residues 1-21 form the signal peptide; it reads MRPALALCLLCPAFWPRPGNG. Over 22–386 the chain is Extracellular; it reads EHPTADRAAC…VSLTFDTSST (365 aa). The region spanning 33–173 is the C-type lectin domain; that stretch reads ASGACYSLHH…LRTDGYLCKY (141 aa). Cys-143 and Cys-162 form a disulfide bridge. A glycan (N-linked (GlcNAc...) asparagine) is linked at Asn-189. In terms of domain architecture, EGF-like spans 246 to 288; the sequence is PCSGRYLLAGKCVELPDCLDHLGDFTCECAVGFELGKDGRSCE. 3 N-linked (GlcNAc...) asparagine glycosylation sites follow: Asn-306, Asn-317, and Asn-370. The helical transmembrane segment at 387–407 threads the bilayer; sequence VVFILVSIAVIVLVVLTITVL. The Cytoplasmic segment spans residues 408 to 459; sequence GLFKLCFHKSRSSRTGKGALDSPGVECDAEATSLHHSSTQCTDIGVKSGTVA. The residue at position 440 (Ser-440) is a Phosphoserine.

The protein localises to the membrane. This Mus musculus (Mouse) protein is C-type lectin domain family 14 member A (Clec14a).